The chain runs to 84 residues: Small ribosomal subunit protein uS17 (84 aa).

It belongs to the universal ribosomal protein uS17 family. As to quaternary structure, part of the 30S ribosomal subunit.

One of the primary rRNA binding proteins, it binds specifically to the 5'-end of 16S ribosomal RNA. The chain is Small ribosomal subunit protein uS17 from Clostridium acetobutylicum (strain ATCC 824 / DSM 792 / JCM 1419 / IAM 19013 / LMG 5710 / NBRC 13948 / NRRL B-527 / VKM B-1787 / 2291 / W).